A 192-amino-acid polypeptide reads, in one-letter code: Ion-translocating oxidoreductase complex subunit B (192 aa).

A hydrophobic region spans residues 1–26; it reads MNAIWIAVAAVSLLGLAFGAILGYAS. The region spanning 32 to 91 is the 4Fe-4S domain; the sequence is EDDPVVEKIDEILPQSQCGQCGYPGCRPYAEAISCNGEKINRCAPGGEAVMLKIAELLNV. [4Fe-4S] cluster-binding residues include Cys-49, Cys-52, Cys-57, Cys-74, Cys-117, Cys-120, Cys-123, Cys-127, Cys-147, Cys-150, Cys-153, and Cys-157. 2 consecutive 4Fe-4S ferredoxin-type domains span residues 108 to 137 and 138 to 167; these read MVAVIDENNCIGCTKCIQACPVDAIVGATR and AMHTVMSDLCTGCNLCVDPCPTHCISLQPV.

This sequence belongs to the 4Fe4S bacterial-type ferredoxin family. RnfB subfamily. As to quaternary structure, the complex is composed of six subunits: RsxA, RsxB, RsxC, RsxD, RsxE and RsxG. The cofactor is [4Fe-4S] cluster.

The protein resides in the cell inner membrane. Its function is as follows. Part of a membrane-bound complex that couples electron transfer with translocation of ions across the membrane. Required to maintain the reduced state of SoxR. The chain is Ion-translocating oxidoreductase complex subunit B from Escherichia coli O139:H28 (strain E24377A / ETEC).